Consider the following 554-residue polypeptide: MRTAMSCGGGLVQRLDFSSSEEEDGLSNGINEAPQKGSPVSSWRTNNCPFPITPQRNERGLSPTQELSPSSDYSPDPSDKGAGGECPGTPLHYSTWKKLKLCDTPYTPKSLLYKTLPSPGSRVHCRGQRLLRFVAGTGAETEDPTLVNVNPFTPQSYRQTHFQPNGKRKERPEDDCSSDSQMKFTDKEHPSVFQSKRFVLRETNMESRYKTEFLEIEKIGAGEFGSVFKCVKRLDGCFYVIKRSKKPLAGSTDEQLALREVYAHAVLGHHPHVVRYYSAWAEDDHMIIQNEYCNGGSLQDLIMENNKKGQFVPEQELKEILLQVSMGLKYIHGSGLVHMDIKPSNIFICRKQTEVGEDESDGEDDVSSASVLYKIGDLGHVTSILNPQVEEGDSRFLANEILQEDYRQLPKADIFALGLTIALAAGAAPLPCNEDGWHHIRKGNLPHIPQPLTPAFLALLKLLVHPDPATRPPAASLAKNSVLRRCVGKAAELQKQLNVEKFKTAMLERELQAAKLAQDECLDLPPVSGFSCRGRKRLVGAKNARSLSFTCGGY.

Disordered stretches follow at residues 1 to 86 (MRTA…GGEC) and 145 to 183 (TLVN…SQMK). Polar residues-rich tracts occupy residues 38-48 (SPVSSWRTNNC) and 147-163 (VNVN…THFQ). The region spanning 213–487 (FLEIEKIGAG…AKNSVLRRCV (275 aa)) is the Protein kinase domain. Residues 219–227 (IGAGEFGSV) and Lys242 contribute to the ATP site. The active-site Proton acceptor is Asp340. Mg(2+)-binding residues include Asn345 and Asp377. Residues 490 to 516 (AAELQKQLNVEKFKTAMLERELQAAKL) adopt a coiled-coil conformation.

This sequence belongs to the protein kinase superfamily. Ser/Thr protein kinase family. WEE1 subfamily.

It is found in the nucleus. It catalyses the reaction L-tyrosyl-[protein] + ATP = O-phospho-L-tyrosyl-[protein] + ADP + H(+). In terms of biological role, protein tyrosine kinase that phosphorylates and inhibits cdk1 and acts as a regulator of meiosis in oocytes. Required to ensure the meiotic cell cycle in oocytes by phosphorylating cdk1 at 'Tyr-15', leading to inhibit cdk1 activity and prevent meiosis. This chain is Wee1-like protein kinase 2-C (wee2-c), found in Xenopus laevis (African clawed frog).